A 229-amino-acid polypeptide reads, in one-letter code: Ribonuclease HII (229 aa).

An RNase H type-2 domain is found at 34–223; sequence WPVAGADEAG…LRKTENGPET (190 aa). The a divalent metal cation site is built by Asp40, Glu41, and Asp131. The segment at 209–229 is disordered; that stretch reads MSFRPLRKTENGPETDELLSE.

The protein belongs to the RNase HII family. It depends on Mn(2+) as a cofactor. Requires Mg(2+) as cofactor.

Its subcellular location is the cytoplasm. The enzyme catalyses Endonucleolytic cleavage to 5'-phosphomonoester.. Its function is as follows. Endonuclease that specifically degrades the RNA of RNA-DNA hybrids. The protein is Ribonuclease HII of Rhizobium johnstonii (strain DSM 114642 / LMG 32736 / 3841) (Rhizobium leguminosarum bv. viciae).